The chain runs to 68 residues: Ribosome modulation factor (68 aa).

The protein belongs to the ribosome modulation factor family.

It localises to the cytoplasm. In terms of biological role, during stationary phase, converts 70S ribosomes to an inactive dimeric form (100S ribosomes). The chain is Ribosome modulation factor from Alcanivorax borkumensis (strain ATCC 700651 / DSM 11573 / NCIMB 13689 / SK2).